The sequence spans 144 residues: MISINFNFLKIKGIINMNINRPISPHLTIYKLQITNTLSIFHRITGGVLALTLCFFILILKMLNFHLSSYAFYSIAYTLNQYSGFLFIAISFFLLLFIFYHLFAGLRHLVWDAGYALEIENVYLTGYIMLGLAFLFTLIAWIIF.

3 helical membrane passes run 40 to 60 (IFHR…ILIL), 84 to 104 (GFLF…HLFA), and 124 to 144 (LTGY…WIIF). His101 contributes to the heme binding site.

It belongs to the cytochrome b560 family. In terms of assembly, forms part of complex II containing four subunits: a 70 kDa flavoprotein (FP), a 27 kDa iron-sulfur protein (IP), a cytochrome B and a membrane-anchoring protein. Heme is required as a cofactor.

The protein resides in the mitochondrion inner membrane. Its pathway is carbohydrate metabolism; tricarboxylic acid cycle. In terms of biological role, membrane-anchoring subunit of succinate dehydrogenase (SDH) that is involved in complex II of the mitochondrial electron transport chain and is responsible for transferring electrons from succinate to ubiquinone (coenzyme Q). The protein is Succinate dehydrogenase cytochrome b560 subunit (SDH3) of Reclinomonas americana.